The primary structure comprises 190 residues: Holliday junction branch migration complex subunit RuvA (190 aa).

Positions 1-64 (MIGKLTGTLL…EDAQLLYGFG (64 aa)) are domain I. Residues 65-137 (TAQERQAFRE…LKGKLGADVG (73 aa)) are domain II. A flexible linker region spans residues 137-141 (GVRAH). Positions 142–190 (AANDNQADILQALLALGYNDKEAAAALKALPADVGVSEGIKLALKSLSK) are domain III.

It belongs to the RuvA family. Homotetramer. Forms an RuvA(8)-RuvB(12)-Holliday junction (HJ) complex. HJ DNA is sandwiched between 2 RuvA tetramers; dsDNA enters through RuvA and exits via RuvB. An RuvB hexamer assembles on each DNA strand where it exits the tetramer. Each RuvB hexamer is contacted by two RuvA subunits (via domain III) on 2 adjacent RuvB subunits; this complex drives branch migration. In the full resolvosome a probable DNA-RuvA(4)-RuvB(12)-RuvC(2) complex forms which resolves the HJ.

The protein localises to the cytoplasm. The RuvA-RuvB-RuvC complex processes Holliday junction (HJ) DNA during genetic recombination and DNA repair, while the RuvA-RuvB complex plays an important role in the rescue of blocked DNA replication forks via replication fork reversal (RFR). RuvA specifically binds to HJ cruciform DNA, conferring on it an open structure. The RuvB hexamer acts as an ATP-dependent pump, pulling dsDNA into and through the RuvAB complex. HJ branch migration allows RuvC to scan DNA until it finds its consensus sequence, where it cleaves and resolves the cruciform DNA. The protein is Holliday junction branch migration complex subunit RuvA of Acidovorax ebreus (strain TPSY) (Diaphorobacter sp. (strain TPSY)).